The sequence spans 327 residues: MRKKIIATVIGTSALAAVTWTNADAATTYKVKSGDSLWSIANKYNMSVAKLKSLNNLTSNVIFPNQSLKVSGSTSSSTSSNTSTGSTYTVKSGDTLSGIAAKYGTTYQKIMSLNGLSNFNIYPGQKLKVSGAASSSSSNTSGNTSSGSTTTYTVKSGDSLSAIAAKYGTTYQKIMSLNGLTNFNIYPGQKLKVSGKASTGGSGSSSTGSAGYKTPVFNHSNLYDWGQCTWHVFNKRAQIGKGISTYWWNANNWDTAAAADGYTIDRKATVGSILQSDMGYYGHVAFVESVNANGSITISEMNYSASPGIVTYRTIPASQVSSYVYIH.

The N-terminal stretch at 1 to 25 (MRKKIIATVIGTSALAAVTWTNADA) is a signal peptide. LysM domains lie at 27–70 (TTYK…SLKV), 86–129 (STYT…KLKV), and 150–193 (TTYT…KLKV). The tract at residues 68-89 (LKVSGSTSSSTSSNTSTGSTYT) is disordered. Low complexity predominate over residues 71–87 (SGSTSSSTSSNTSTGST). Residues 203–327 (GSSSTGSAGY…SQVSSYVYIH (125 aa)) enclose the Peptidase C51 domain.

It localises to the secreted. It is found in the cell surface. It catalyses the reaction Hydrolyzes the link between N-acetylmuramoyl residues and L-amino acid residues in certain cell-wall glycopeptides.. Peptidoglycan hydrolase involved in the splitting of the septum during cell division. The protein is N-acetylmuramoyl-L-alanine amidase sle1 (sle1) of Staphylococcus saprophyticus subsp. saprophyticus (strain ATCC 15305 / DSM 20229 / NCIMB 8711 / NCTC 7292 / S-41).